Reading from the N-terminus, the 440-residue chain is Trigger factor (440 aa).

Residues Gly161–Pro257 form the PPIase FKBP-type domain.

Belongs to the FKBP-type PPIase family. Tig subfamily.

The protein localises to the cytoplasm. It catalyses the reaction [protein]-peptidylproline (omega=180) = [protein]-peptidylproline (omega=0). Functionally, involved in protein export. Acts as a chaperone by maintaining the newly synthesized protein in an open conformation. Functions as a peptidyl-prolyl cis-trans isomerase. This Opitutus terrae (strain DSM 11246 / JCM 15787 / PB90-1) protein is Trigger factor.